The sequence spans 209 residues: Kynurenine formamidase (209 aa).

A substrate-binding site is contributed by W20. Zn(2+)-binding residues include H50, H54, and D56. Catalysis depends on H60, which acts as the Proton donor/acceptor. Zn(2+)-binding residues include H161 and E173.

The protein belongs to the Cyclase 1 superfamily. KynB family. Homodimer. Zn(2+) serves as cofactor.

The enzyme catalyses N-formyl-L-kynurenine + H2O = L-kynurenine + formate + H(+). The protein operates within amino-acid degradation; L-tryptophan degradation via kynurenine pathway; L-kynurenine from L-tryptophan: step 2/2. In terms of biological role, catalyzes the hydrolysis of N-formyl-L-kynurenine to L-kynurenine, the second step in the kynurenine pathway of tryptophan degradation. This chain is Kynurenine formamidase, found in Bacillus cytotoxicus (strain DSM 22905 / CIP 110041 / 391-98 / NVH 391-98).